We begin with the raw amino-acid sequence, 309 residues long: Ribonuclease Z (309 aa).

The Zn(2+) site is built by H61, H63, D65, H66, H144, D212, and H271. The Proton acceptor role is filled by D65.

The protein belongs to the RNase Z family. Homodimer. It depends on Zn(2+) as a cofactor.

The enzyme catalyses Endonucleolytic cleavage of RNA, removing extra 3' nucleotides from tRNA precursor, generating 3' termini of tRNAs. A 3'-hydroxy group is left at the tRNA terminus and a 5'-phosphoryl group is left at the trailer molecule.. Functionally, zinc phosphodiesterase, which displays some tRNA 3'-processing endonuclease activity. Probably involved in tRNA maturation, by removing a 3'-trailer from precursor tRNA. The sequence is that of Ribonuclease Z from Clostridium acetobutylicum (strain ATCC 824 / DSM 792 / JCM 1419 / IAM 19013 / LMG 5710 / NBRC 13948 / NRRL B-527 / VKM B-1787 / 2291 / W).